A 68-amino-acid polypeptide reads, in one-letter code: Conotoxin ba14a (68 aa).

The signal sequence occupies residues methionine 1–glycine 20. A propeptide spanning residues leucine 21–arginine 50 is cleaved from the precursor.

Contains 2 disulfide bonds. In terms of tissue distribution, expressed by the venom duct.

The protein resides in the secreted. This Conus bayani (Bayan's cone) protein is Conotoxin ba14a.